Here is a 411-residue protein sequence, read N- to C-terminus: DHDYEFPGIQAFAGLGMGFGGSPGGGSLYLPSGNDGGLLSGSEKETMQNLNDRLASYLDKVRALEDANAELENKIREWYEARGHGHGDCGPQHDYSKYHPLIEDLRNKIISASIGNAQLILQIDNARLAADDFRMKFENEAALRQTVEADINGLRRVLDELTLARADLEAQIESLTEELAYMKKNHEEELQSCRAGGPGEVSVEMDAAPGVDLTRLLNDMRAQYEAIAEQNRKDAEAWFIEKSGELRKEISTNTEQLQSSKSEVTDLRRALQNLEIELQSQLAMKKSLEDSLAETEGDYCGQLSQVQQLVGDLEAQLQQVRSDTERQNMDYQRLLNVKARLELEIETYRRLLDGEAQGDGLDESSAMTGSRSQAQSIDSSKDPSKTRKIKTIVQEVVNGEVVSSQVQEIQN.

Positions 1–42 are head; that stretch reads DHDYEFPGIQAFAGLGMGFGGSPGGGSLYLPSGNDGGLLSGS. A coil 1A region spans residues 43–78; sequence EKETMQNLNDRLASYLDKVRALEDANAELENKIREW. One can recognise an IF rod domain in the interval 43–359; it reads EKETMQNLND…RLLDGEAQGD (317 aa). Residues 83 to 101 form a linker 1 region; that stretch reads GHGHGDCGPQHDYSKYHPL. The segment at 102–193 is coil 1B; the sequence is IEDLRNKIIS…KNHEEELQSC (92 aa). The tract at residues 194–216 is linker 12; sequence RAGGPGEVSVEMDAAPGVDLTRL. The interval 217–354 is coil 2; sequence LNDMRAQYEA…IETYRRLLDG (138 aa). Positions 355 to 411 are tail; the sequence is EAQGDGLDESSAMTGSRSQAQSIDSSKDPSKTRKIKTIVQEVVNGEVVSSQVQEIQN. The interval 356–387 is disordered; the sequence is AQGDGLDESSAMTGSRSQAQSIDSSKDPSKTR. The segment covering 365 to 378 has biased composition (polar residues); sequence SAMTGSRSQAQSID.

Belongs to the intermediate filament family. As to quaternary structure, heterotetramer of two type I and two type II keratins. Keratin-3 associates with keratin-12. Cornea specific. Associated mainly with all layers of the central corneal epithelium and also found in the suprabasal limbal epithelium.

Involved in corneal epithelium organization, integrity and corneal keratin expression. The sequence is that of Keratin, type I cytoskeletal 12 (KRT12) from Oryctolagus cuniculus (Rabbit).